The primary structure comprises 368 residues: MTSVDINNNNNNNNNSNSNIIETKLIGHKDTVLCISSHNKKEIIASGSDDCTVRIWDLNTNKSIQSIVEGFQGNPVNNVCFDQDFTLYCSYDNIIVSFDLRQPNVILKEFNTQYKFNTEEINQLSFDSKYQYLAACDDSGQTKIIDVTKNKLVESLNKKHTNIATGCVFRPNSKNELITSSMDFSIIHWDFLKAKVLHRDTFKEGSLPQNISKSQQQQQETTEPNRMLNPPFVTSVDCSNNSKYVAISMGDGTIVINEISSFKQYLKINSIHKSSIQQVHYPKYLENNYQRLISFGNYDKKIVIWDVSEDMNTKVSSSLLSNDEKNNERIKTWLEHSEKINCLTTSNLKNNAIFVADLSNDLKLLSIQ.

6 WD repeats span residues 27 to 66 (GHKD…SIQS), 71 to 108 (FQGN…VILK), 116 to 155 (FNTE…LVES), 159 to 199 (KHTN…VLHR), 228 to 267 (LNPP…QYLK), and 271 to 315 (IHKS…NTKV). Residues 207 to 231 (LPQNISKSQQQQQETTEPNRMLNPP) form a disordered region.

It belongs to the WD repeat WDR53 family.

The chain is WD repeat-containing protein 53 homolog (wdr53) from Dictyostelium discoideum (Social amoeba).